The sequence spans 589 residues: Proline--tRNA ligase (589 aa).

This sequence belongs to the class-II aminoacyl-tRNA synthetase family. ProS type 1 subfamily. Homodimer.

The protein resides in the cytoplasm. It catalyses the reaction tRNA(Pro) + L-proline + ATP = L-prolyl-tRNA(Pro) + AMP + diphosphate. Functionally, catalyzes the attachment of proline to tRNA(Pro) in a two-step reaction: proline is first activated by ATP to form Pro-AMP and then transferred to the acceptor end of tRNA(Pro). As ProRS can inadvertently accommodate and process non-cognate amino acids such as alanine and cysteine, to avoid such errors it has two additional distinct editing activities against alanine. One activity is designated as 'pretransfer' editing and involves the tRNA(Pro)-independent hydrolysis of activated Ala-AMP. The other activity is designated 'posttransfer' editing and involves deacylation of mischarged Ala-tRNA(Pro). The misacylated Cys-tRNA(Pro) is not edited by ProRS. The polypeptide is Proline--tRNA ligase (Nocardioides sp. (strain ATCC BAA-499 / JS614)).